We begin with the raw amino-acid sequence, 170 residues long: Ribosome maturation factor RimM (170 aa).

The region spanning 95-168 (EDAYYYHEIV…IIKVQLMEGM (74 aa)) is the PRC barrel domain.

The protein belongs to the RimM family. As to quaternary structure, binds ribosomal protein uS19.

The protein resides in the cytoplasm. Its function is as follows. An accessory protein needed during the final step in the assembly of 30S ribosomal subunit, possibly for assembly of the head region. Essential for efficient processing of 16S rRNA. May be needed both before and after RbfA during the maturation of 16S rRNA. It has affinity for free ribosomal 30S subunits but not for 70S ribosomes. The protein is Ribosome maturation factor RimM of Oceanobacillus iheyensis (strain DSM 14371 / CIP 107618 / JCM 11309 / KCTC 3954 / HTE831).